Here is a 253-residue protein sequence, read N- to C-terminus: Ribosomal RNA small subunit methyltransferase A (253 aa).

Histidine 12, leucine 14, glycine 39, glutamate 60, aspartate 81, and asparagine 104 together coordinate S-adenosyl-L-methionine.

It belongs to the class I-like SAM-binding methyltransferase superfamily. rRNA adenine N(6)-methyltransferase family. RsmA subfamily.

It localises to the cytoplasm. The enzyme catalyses adenosine(1518)/adenosine(1519) in 16S rRNA + 4 S-adenosyl-L-methionine = N(6)-dimethyladenosine(1518)/N(6)-dimethyladenosine(1519) in 16S rRNA + 4 S-adenosyl-L-homocysteine + 4 H(+). Its function is as follows. Specifically dimethylates two adjacent adenosines (A1518 and A1519) in the loop of a conserved hairpin near the 3'-end of 16S rRNA in the 30S particle. May play a critical role in biogenesis of 30S subunits. The polypeptide is Ribosomal RNA small subunit methyltransferase A (Paracidovorax citrulli (strain AAC00-1) (Acidovorax citrulli)).